The sequence spans 30 residues: uncharacterized protein (30 aa).

The N-terminal stretch at 1 to 22 (MRFLFFLPPSFITSFLYLALYS) is a signal peptide.

This is an uncharacterized protein from Schizosaccharomyces pombe (strain 972 / ATCC 24843) (Fission yeast).